Consider the following 487-residue polypeptide: WAS/WASL-interacting protein family member 1 (487 aa).

The span at 1–14 (MPVPPPPAPPPPPT) shows a compositional bias: pro residues. Positions 1-487 (MPVPPPPAPP…GAPPLPPIPR (487 aa)) are disordered. The segment covering 21–31 (EKPSLNKTEQA) has biased composition (polar residues). Residues 32-49 (GRNALLSDISKGKKLKKT) enclose the WH2 domain. An Asymmetric dimethylarginine modification is found at arginine 33. The interval 45–48 (KLKK) is binds actin. Over residues 64–100 (GAGGGYGGGSGGGGGGGSSGGGGNFGGGGPPGLGGLF) the composition is skewed to gly residues. 2 positions are modified to omega-N-methylarginine: arginine 121 and arginine 130. Residues 136–147 (PFSSPSGPGRFP) are compositionally biased toward low complexity. Position 138 is a phosphoserine (serine 138). Pro residues-rich tracts occupy residues 157 to 170 (PPEP…PPRP) and 178 to 190 (SLPP…PRPI). Serine 222 carries the post-translational modification Phosphoserine. 3 stretches are compositionally biased toward pro residues: residues 234 to 243 (FPRPPLPPTP), 269 to 285 (VPPP…PSTP), and 293 to 309 (APPP…PLPP). A Phosphoserine modification is found at serine 324. The segment covering 328 to 355 (PTPPLPSPGRSGPLPPPPTERPPPPVRD) has biased composition (pro residues). Position 329 is a phosphothreonine (threonine 329). Serine 334 carries the post-translational modification Phosphoserine. XRSGPXPPXP motif repeat units follow at residues 336 to 345 (GRSGPLPPPP), 358 to 367 (GRSGPLPPPP), and 394 to 403 (PRSGPRPPLP). The span at 397–418 (GPRPPLPPDRPGAGAPPPPPPS) shows a compositional bias: pro residues. Residues 419–428 (TSVRNGFQDS) are compositionally biased toward polar residues. Basic and acidic residues predominate over residues 464 to 478 (ARSESRSGSNRRERG).

The protein belongs to the verprolin family. Binds to WAS within the N-terminal region, at a site distinct from the CDC42-binding site. Binds profilin and actin. Interacts with DBNL. Binds to WASL. Interacts with DBNL. Interacts with FNBP1L (via the SH3 domain). In terms of tissue distribution, isoforms were differentially expressed. One isoform was ubiquitously expressed, another was muscle-specific and another was expressed in the liver, heart and testis.

The protein localises to the cytoplasmic vesicle. It is found in the cytoplasm. It localises to the cytoskeleton. Its subcellular location is the cell projection. The protein resides in the ruffle. Plays a role in the reorganization of the actin cytoskeleton. Contributes with NCK1 and GRB2 in the recruitment and activation of WASL. Plays a role in the formation of cell ruffles. May participate in regulating the subcellular localization of WASL, resulting in the disassembly of stress fibers in favor of filopodia formation. This is WAS/WASL-interacting protein family member 1 (Wipf1) from Rattus norvegicus (Rat).